The primary structure comprises 92 residues: MARSIWKGPFVDGYLIKKVQKLMESGKSEMIKTWSRRSTILPIFVGFTFSVHNGNKFIPVSVNEEMVGRKLGEFAPTRTFHGHGADKKIKRK.

This sequence belongs to the universal ribosomal protein uS19 family.

Functionally, protein S19 forms a complex with S13 that binds strongly to the 16S ribosomal RNA. The polypeptide is Small ribosomal subunit protein uS19 (Rickettsia africae (strain ESF-5)).